The sequence spans 65 residues: Photosystem II reaction center protein J (65 aa).

Positions 1-17 (MSTKLKGPDGRIPDRLP) are enriched in basic and acidic residues. The tract at residues 1–20 (MSTKLKGPDGRIPDRLPDGT) is disordered. Residues 36-56 (LWLVATVGGMAVLSVLGLFFF) traverse the membrane as a helical segment.

It belongs to the PsbJ family. As to quaternary structure, PSII is composed of 1 copy each of membrane proteins PsbA, PsbB, PsbC, PsbD, PsbE, PsbF, PsbH, PsbI, PsbJ, PsbK, PsbL, PsbM, PsbT, PsbX, PsbY, Psb30/Ycf12, peripheral proteins PsbO, CyanoQ (PsbQ), PsbU, PsbV and a large number of cofactors. It forms dimeric complexes.

It is found in the cellular thylakoid membrane. Functionally, one of the components of the core complex of photosystem II (PSII). PSII is a light-driven water:plastoquinone oxidoreductase that uses light energy to abstract electrons from H(2)O, generating O(2) and a proton gradient subsequently used for ATP formation. It consists of a core antenna complex that captures photons, and an electron transfer chain that converts photonic excitation into a charge separation. The protein is Photosystem II reaction center protein J of Prochlorococcus marinus (strain MIT 9303).